Here is a 356-residue protein sequence, read N- to C-terminus: V-type proton ATPase subunit d (356 aa).

This sequence belongs to the V-ATPase V0D/AC39 subunit family. As to quaternary structure, V-ATPase is a heteromultimeric enzyme composed of a peripheral catalytic V1 complex (components A to H) attached to an integral membrane V0 proton pore complex (components: a, c, c', c'' and d).

Functionally, subunit of the integral membrane V0 complex of vacuolar ATPase. Vacuolar ATPase is responsible for acidifying a variety of intracellular compartments in eukaryotic cells, thus providing most of the energy required for transport processes in the vacuolar system. The polypeptide is V-type proton ATPase subunit d (vatD-1) (Dictyostelium discoideum (Social amoeba)).